An 81-amino-acid chain; its full sequence is UPF0298 protein SAK_1599 (81 aa).

This sequence belongs to the UPF0298 family.

The protein resides in the cytoplasm. This chain is UPF0298 protein SAK_1599, found in Streptococcus agalactiae serotype Ia (strain ATCC 27591 / A909 / CDC SS700).